The chain runs to 306 residues: D-alanine--D-alanine ligase B (306 aa).

Residues 101-303 enclose the ATP-grasp domain; it reads KLLWQGAGLP…FSQLVVRILE (203 aa). 134–189 serves as a coordination point for ATP; it reads ISALGLPVIVKPSREGSSVGMSKVVAENALQDALRLAFQHDEEVLIEKWLSGPEFT. Residues Asp-257, Glu-270, and Asn-272 each contribute to the Mg(2+) site.

This sequence belongs to the D-alanine--D-alanine ligase family. Mg(2+) serves as cofactor. It depends on Mn(2+) as a cofactor.

It localises to the cytoplasm. The enzyme catalyses 2 D-alanine + ATP = D-alanyl-D-alanine + ADP + phosphate + H(+). Its pathway is cell wall biogenesis; peptidoglycan biosynthesis. Cell wall formation. In Shigella flexneri, this protein is D-alanine--D-alanine ligase B.